The following is a 100-amino-acid chain: Putative membrane protein insertion efficiency factor (100 aa).

The interval Asp-73–Gly-100 is disordered.

This sequence belongs to the UPF0161 family.

It localises to the cell inner membrane. Its function is as follows. Could be involved in insertion of integral membrane proteins into the membrane. The sequence is that of Putative membrane protein insertion efficiency factor from Synechococcus sp. (strain JA-3-3Ab) (Cyanobacteria bacterium Yellowstone A-Prime).